A 431-amino-acid polypeptide reads, in one-letter code: Acyl transferase 8 (431 aa).

His-169 serves as the catalytic Proton acceptor. Disordered stretches follow at residues 220–247 (VADARGGVRPGVPRPRVLRHERAPRAPA), 260–313 (HHAG…DHLR), and 331–400 (GLRV…PPPT). A compositionally biased stretch (low complexity) spans 224–234 (RGGVRPGVPRP). Residues 264-273 (DGGGGGGGGR) show a composition bias toward gly residues. 2 stretches are compositionally biased toward basic residues: residues 297 to 306 (ERRRRRRRGR) and 335 to 380 (GRPR…RRLP). The segment covering 381 to 394 (QRHDAPRLITERAH) has biased composition (basic and acidic residues).

The protein belongs to the plant acyltransferase family.

In terms of biological role, involved in the incorporation of ferulate into the cell wall. May act as arabinoxylan feruloyl transferase. The protein is Acyl transferase 8 of Oryza sativa subsp. japonica (Rice).